The following is a 180-amino-acid chain: 3-hydroxyanthranilate 3,4-dioxygenase (180 aa).

An O2-binding site is contributed by R44. 3 residues coordinate Fe cation: H48, E54, and H92. Substrate is bound at residue E54. Substrate-binding residues include R96 and E106. A divalent metal cation-binding residues include C121, C124, C158, and C161.

This sequence belongs to the 3-HAO family. Fe(2+) is required as a cofactor.

The protein localises to the cytoplasm. It catalyses the reaction 3-hydroxyanthranilate + O2 = (2Z,4Z)-2-amino-3-carboxymuconate 6-semialdehyde. It functions in the pathway cofactor biosynthesis; NAD(+) biosynthesis; quinolinate from L-kynurenine: step 3/3. Catalyzes the oxidative ring opening of 3-hydroxyanthranilate to 2-amino-3-carboxymuconate semialdehyde, which spontaneously cyclizes to quinolinate. The sequence is that of 3-hydroxyanthranilate 3,4-dioxygenase (bna1) from Neurospora crassa (strain ATCC 24698 / 74-OR23-1A / CBS 708.71 / DSM 1257 / FGSC 987).